Reading from the N-terminus, the 77-residue chain is Putative defensin-like protein 30 (77 aa).

A signal peptide spans Met-1–Ala-26. 3 disulfides stabilise this stretch: Cys-43–Cys-63, Cys-49–Cys-72, and Cys-53–Cys-74.

It belongs to the DEFL family.

The protein resides in the secreted. This Arabidopsis thaliana (Mouse-ear cress) protein is Putative defensin-like protein 30.